The primary structure comprises 533 residues: Malate synthase A (533 aa).

R166 functions as the Proton acceptor in the catalytic mechanism. The active-site Proton donor is D447.

It belongs to the malate synthase family.

The protein localises to the cytoplasm. It carries out the reaction glyoxylate + acetyl-CoA + H2O = (S)-malate + CoA + H(+). The protein operates within carbohydrate metabolism; glyoxylate cycle; (S)-malate from isocitrate: step 2/2. The protein is Malate synthase A (aceB) of Escherichia coli (strain K12).